The sequence spans 937 residues: MLLYRGAPAGPGAPGCGLARPGGGPQAFGIRLSTMSPRYLQSNSSSHTRPFSAIAELLDNAVDPDVSARTVFIDVEEVKNKSCLTFTDDGCGMTPHKLHRMLSFGFTDKVIKKSQCPIGVFGNGFKSGSMRLGKDALVFTKNGGTLTVGLLSQTYLECVQAQAVIVPIVPFNQQNKKMIITEDSLPSLEAILNYSIFNRENDLLAQFDAIPGKKGTRVLIWNIRRNKNGKSELDFDTDQYDILVSDFDTEEKMTGGVTSELPETEYSLRAFCGILYMKPRMKIFLRQKKVTTQMIAKSLANVEYDTYKPTFTNKQVRITFGFSCKNSNQFGIMMYHNNRLIKSFEKVGCQVKPTRGEGVGVIGVIECNFLKPAYNKQDFEYTKEYRLTINALAQKLNAYWKEKTSQDNFETSTVARPIPKVPDQTWVQCDECLKWRKLPGKIDPSMLPARWFCYYNSHPKYRRCSVPEEQELTDEDLCLSKAKKQEQTVEEKKKMPMENENHQVFSNPPKILTVQEMAGLNNKTIGYEGIHSPSVLPSGGEESRSPSLQLKPLDSSVLQFSSKYKWILGEEPVEKRRRLQNEMTTPSLDYSMPAPYRRVEAPVAYPEGENSHDKSSSERSTPPYLFPEYPEASKNTGQNREVSILYPGAKDQRQGSLLPEELEDQMPRLVAEESNRGSTTINKEEVNKGPFVAVVGVAKGVRDSGAPIQLIPFNREELAERRKAVESWNPVPYSVASAAIPAAAIGEKARGYEESEGHNTPKLKNQRELEELKRTTEKLERVLAERNLFQQKVEELEQERNHWQSEFKKVQHELVIYSTQEAEGLYWSKKHMGYRQAEFQILKAELERTKEEKQELKEKLKETETHLEMLQKAQVSYRTPEGDDLERALAKLTRLRIHVSYLLTSVLPHLELREIGYDSEQVDGILYTVLEANHILD.

The segment at 420 to 472 adopts a CW-type zinc-finger fold; the sequence is KVPDQTWVQCDECLKWRKLPGKIDPSMLPARWFCYYNSHPKYRRCSVPEEQEL. Cys429, Cys432, Cys453, and Cys464 together coordinate Zn(2+). A disordered region spans residues 606 to 637; sequence PEGENSHDKSSSERSTPPYLFPEYPEASKNTG. Positions 762–876 form a coiled coil; that stretch reads KLKNQRELEE…LEMLQKAQVS (115 aa).

In terms of tissue distribution, expressed at low levels in normal tissues, with highest expression levels in placenta and testis. Expression is significantly increased in subset of diffuse large B-cell lymphomas.

Its subcellular location is the nucleus. In terms of biological role, histone methylation reader which binds to non-methylated (H3K4me0), monomethylated (H3K4me1), dimethylated (H3K4me2) and trimethylated (H3K4me3) 'Lys-4' on histone H3. The order of binding preference is H3K4me3 &gt; H3K4me2 &gt; H3K4me1 &gt; H3K4me0. The chain is MORC family CW-type zinc finger protein 4 (MORC4) from Homo sapiens (Human).